Here is a 187-residue protein sequence, read N- to C-terminus: Large ribosomal subunit protein eL18B (187 aa).

The residue at position 134 (threonine 134) is a Phosphothreonine. Position 136 is a phosphoserine (serine 136).

This sequence belongs to the eukaryotic ribosomal protein eL18 family. Component of the large ribosomal subunit (LSU). Mature yeast ribosomes consist of a small (40S) and a large (60S) subunit. The 40S small subunit contains 1 molecule of ribosomal RNA (18S rRNA) and at least 33 different proteins. The large 60S subunit contains 3 rRNA molecules (25S, 5.8S and 5S rRNA) and at least 46 different proteins. eL18 interacts with NAP1.

Its subcellular location is the cytoplasm. Functionally, component of the ribosome, a large ribonucleoprotein complex responsible for the synthesis of proteins in the cell. The small ribosomal subunit (SSU) binds messenger RNAs (mRNAs) and translates the encoded message by selecting cognate aminoacyl-transfer RNA (tRNA) molecules. The large subunit (LSU) contains the ribosomal catalytic site termed the peptidyl transferase center (PTC), which catalyzes the formation of peptide bonds, thereby polymerizing the amino acids delivered by tRNAs into a polypeptide chain. The nascent polypeptides leave the ribosome through a tunnel in the LSU and interact with protein factors that function in enzymatic processing, targeting, and the membrane insertion of nascent chains at the exit of the ribosomal tunnel. This chain is Large ribosomal subunit protein eL18B (rpl1802), found in Schizosaccharomyces pombe (strain 972 / ATCC 24843) (Fission yeast).